We begin with the raw amino-acid sequence, 828 residues long: MATSENCRNAAGAGKVDAEKALYTELWRACAGPLVTVPCEGELVFYFPQGHIEQVEASTNQASDQQMPVYNLPSKILCRVINVLLKAEPDTDEVYAQVTLLPEPNQDENVVSKEPMPSPPPRFHVHSFCKTLTASDTSTHGGFSVLRRHADECLPPLDMSRQPPTQELVAKDLHANEWRFRHIFRGQPRRHLLQSGWSVFVSSKRLVAGDAFIFLRGENGELRVGVRRAMRQQGNAPSSVISSHSMHLGVLATAWHAIQTKTLFTVYYKPRTSPADFIVPYDQYMESLKNNYSIGMRFKMRFEGEEAPEQRFTGTIVGIENADLKRWPESKWRCLKVRWDETSAIPRPDRVSPWKVEPALSPPALNPLPIPRQKRPRSNVLPSSPDSSVLTREGSSKVVVDTSQASGFSRVLQGQEISTLRGNFVENNESDSSEKPPIWQPLLDDEKADVHSASRKCISDKRLPLGRPESSFTDLLSGFGGQSSSSHGFHSPTGGQTAPASWVKRQALDKETDFSLLAKQWSLVSSGLSLNLMESGLKGADTLYQMRGTSRLNCFNEYPTFPGHRPDNQQGNWLMPPSVLPYIQMSAHSGEIMPKPMASPQPEAMKPKEGNCKLFGIPLVSKCATIDPVMLRKNSPIHSTSNMHFGIHPHQFPIIESDQRSEQSKGSKLPDDGFIVHDQEEQFQTSHPGTRDREGKGLVHSTRSCTKVHKQGTALGRSVDLAKFNNYEELIAELDHIFDFNGELKARNKNWLVVYTDDEGDMMLVGDDPWEFCGMVRKIFIYTKDEVQRMNPGTLNSKGEDNSSVAEGSDAKEVKNLQLHIDSSPEDS.

Positions 128–230 (FCKTLTASDT…ELRVGVRRAM (103 aa)) form a DNA-binding region, TF-B3. 3 disordered regions span residues 348–397 (PDRV…GSSK), 681–703 (EQFQ…HSTR), and 791–828 (NPGT…PEDS). The segment covering 360 to 370 (LSPPALNPLPI) has biased composition (pro residues). Over residues 380–390 (VLPSSPDSSVL) the composition is skewed to polar residues. The region spanning 703 to 786 (RSCTKVHKQG…RKIFIYTKDE (84 aa)) is the PB1 domain. Polar residues predominate over residues 791–806 (NPGTLNSKGEDNSSVA).

It belongs to the ARF family. In terms of assembly, homodimers and heterodimers. In terms of tissue distribution, expressed in root, leaf and stem. Also expressed in flower and fruit. Expressed in flower buds about three days before opening including stamen, petal and sepal with the highest in ovary.

The protein resides in the nucleus. Functionally, auxin response factors (ARFs) are transcriptional factors that binds specifically to the DNA sequence 5'-TGTCTC-3' found in the auxin-responsive promoter elements (AuxREs). Could act as transcriptional activator or repressor. Involved in the control of fruit ripening process. Regulates expression of a number of ripening regulators, transcription factors, and ethylene biosynthesis and signaling components. May act as a transcriptional repressor of auxin-responsive genes. The sequence is that of Auxin response factor 2B from Solanum lycopersicum (Tomato).